Consider the following 238-residue polypeptide: Uridylate kinase (238 aa).

Lysine 12–glycine 15 serves as a coordination point for ATP. Glycine 54 contributes to the UMP binding site. Residues glycine 55 and arginine 59 each coordinate ATP. Residues aspartate 74 and threonine 135 to threonine 142 each bind UMP. Positions 162, 163, 168, and 171 each coordinate ATP.

This sequence belongs to the UMP kinase family. Homohexamer.

The protein resides in the cytoplasm. It catalyses the reaction UMP + ATP = UDP + ADP. It participates in pyrimidine metabolism; CTP biosynthesis via de novo pathway; UDP from UMP (UMPK route): step 1/1. Inhibited by UTP. Functionally, catalyzes the reversible phosphorylation of UMP to UDP. This Rhodopseudomonas palustris (strain BisB18) protein is Uridylate kinase.